The primary structure comprises 146 residues: D-aminoacyl-tRNA deacylase (146 aa).

The Gly-cisPro motif, important for rejection of L-amino acids signature appears at 137–138; the sequence is GP.

This sequence belongs to the DTD family. As to quaternary structure, homodimer.

The protein localises to the cytoplasm. The enzyme catalyses glycyl-tRNA(Ala) + H2O = tRNA(Ala) + glycine + H(+). The catalysed reaction is a D-aminoacyl-tRNA + H2O = a tRNA + a D-alpha-amino acid + H(+). Its function is as follows. An aminoacyl-tRNA editing enzyme that deacylates mischarged D-aminoacyl-tRNAs. Also deacylates mischarged glycyl-tRNA(Ala), protecting cells against glycine mischarging by AlaRS. Acts via tRNA-based rather than protein-based catalysis; rejects L-amino acids rather than detecting D-amino acids in the active site. By recycling D-aminoacyl-tRNA to D-amino acids and free tRNA molecules, this enzyme counteracts the toxicity associated with the formation of D-aminoacyl-tRNA entities in vivo and helps enforce protein L-homochirality. This chain is D-aminoacyl-tRNA deacylase, found in Variovorax paradoxus (strain S110).